The following is a 513-amino-acid chain: Putative ribose/galactose/methyl galactoside import ATP-binding protein (513 aa).

ABC transporter domains lie at 24-260 (LSAE…VGRE) and 270-510 (VPIG…VMEL). 56-63 (GENGAGKS) serves as a coordination point for ATP.

The protein belongs to the ABC transporter superfamily. Carbohydrate importer 2 (CUT2) (TC 3.A.1.2) family.

It localises to the cell inner membrane. It catalyses the reaction D-ribose(out) + ATP + H2O = D-ribose(in) + ADP + phosphate + H(+). The enzyme catalyses D-galactose(out) + ATP + H2O = D-galactose(in) + ADP + phosphate + H(+). In terms of biological role, part of an ABC transporter complex involved in carbohydrate import. Could be involved in ribose, galactose and/or methyl galactoside import. Responsible for energy coupling to the transport system. The sequence is that of Putative ribose/galactose/methyl galactoside import ATP-binding protein from Rhizobium johnstonii (strain DSM 114642 / LMG 32736 / 3841) (Rhizobium leguminosarum bv. viciae).